A 364-amino-acid chain; its full sequence is Small ribosomal subunit biogenesis GTPase RsgA (364 aa).

In terms of domain architecture, CP-type G spans 101–264 (KGLVEKPGVP…VIDTPGLREL (164 aa)). Residues 154 to 157 (NKSD) and 206 to 214 (GSSGAGKST) each bind GTP. Zn(2+) is bound by residues C288, C293, H295, and C301. A disordered region spans residues 339–364 (QVAQKRKRKTIPRQGKRWRREHGDGQ). Positions 342–358 (QKRKRKTIPRQGKRWRR) are enriched in basic residues.

This sequence belongs to the TRAFAC class YlqF/YawG GTPase family. RsgA subfamily. In terms of assembly, monomer. Associates with 30S ribosomal subunit, binds 16S rRNA. Requires Zn(2+) as cofactor.

The protein localises to the cytoplasm. In terms of biological role, one of several proteins that assist in the late maturation steps of the functional core of the 30S ribosomal subunit. Helps release RbfA from mature subunits. May play a role in the assembly of ribosomal proteins into the subunit. Circularly permuted GTPase that catalyzes slow GTP hydrolysis, GTPase activity is stimulated by the 30S ribosomal subunit. This chain is Small ribosomal subunit biogenesis GTPase RsgA, found in Syntrophotalea carbinolica (strain DSM 2380 / NBRC 103641 / GraBd1) (Pelobacter carbinolicus).